A 710-amino-acid chain; its full sequence is Tubulin polyglutamylase TTLL11 (710 aa).

The tract at residues 41-135 (VRVDAGAAGE…QRPVTVDSSK (95 aa)) is disordered. Residues 51–60 (PECKAGEEQP) are compositionally biased toward basic and acidic residues. The span at 64–82 (APAPAQPSAAEEGNTQVLQ) shows a compositional bias: low complexity. Over residues 83 to 93 (RPPPTLPPSKP) the composition is skewed to pro residues. Over residues 123 to 135 (NGSQRPVTVDSSK) the composition is skewed to polar residues. The TTL domain occupies 128–480 (PVTVDSSKAR…EVKVAVIRDT (353 aa)). ATP is bound by residues lysine 249, 255–256 (QG), 282–285 (QEYI), and 295–297 (KFD). Residue glutamine 255 coordinates a protein. Arginine 321 lines the L-glutamate pocket. 343 to 344 (TN) provides a ligand contact to ATP. L-glutamate contacts are provided by tyrosine 345, serine 346, and lysine 365. Residues aspartate 428, glutamate 441, and asparagine 443 each contribute to the Mg(2+) site. The tract at residues 467–538 (LVDEEVKVAV…SICLKQVFPK (72 aa)) is c-MTBD region. Lysine 473 provides a ligand contact to L-glutamate. Residues 665–710 (GVPSGGRPPHRGPPQEPSPSAQPAGDNPPPRTSCANKLSHPRHTLS) are disordered.

It belongs to the tubulin--tyrosine ligase family. It depends on Mg(2+) as a cofactor.

It localises to the cytoplasm. The protein localises to the cytoskeleton. It is found in the cilium basal body. The catalysed reaction is L-glutamyl-[protein] + L-glutamate + ATP = gamma-L-glutamyl-L-glutamyl-[protein] + ADP + phosphate + H(+). It carries out the reaction (L-glutamyl)(n)-gamma-L-glutamyl-L-glutamyl-[protein] + L-glutamate + ATP = (L-glutamyl)(n+1)-gamma-L-glutamyl-L-glutamyl-[protein] + ADP + phosphate + H(+). Functionally, polyglutamylase which modifies tubulin, generating polyglutamate side chains of variable lengths on the gamma-carboxyl group of specific glutamate residues within the C-terminal tail of tubulin. Preferentially mediates ATP-dependent polyglutamate long side-chain elongation over the initiation step of the polyglutamylation reaction. Preferentially modifies the alpha-tubulin tail over a beta-tail. Required for CCSAP localization to both spindle and cilia microtubules. Promotes tubulin polyglutamylation which stimulates spastin/SPAST-mediated microtubule severing, thereby regulating microtubule functions. This Homo sapiens (Human) protein is Tubulin polyglutamylase TTLL11.